A 506-amino-acid chain; its full sequence is Bone morphogenetic protein 6 (506 aa).

The signal sequence occupies residues 1–20 (MPGLGRRAQWLCWWWGLLCS). A propeptide spanning residues 21–367 (CGPPPLRPPL…VSEVHVRTTR (347 aa)) is cleaved from the precursor. 3 disordered regions span residues 44-64 (AGGS…SGFL), 87-125 (PHRP…RLKS), and 139-195 (KDDE…PLTS). A compositionally biased stretch (low complexity) spans 96–112 (LQQPQSPVLPQQQQSQQ). A compositionally biased stretch (acidic residues) spans 140–153 (DDEEDGVSEGEGLE). Asn234, Asn262, Asn379, Asn397, and Asn447 each carry an N-linked (GlcNAc...) asparagine glycan. The segment at 366–397 (TRSASSRRRQQSRNRSTQSQDVSRGSSASDYN) is disordered. Polar residues predominate over residues 386–397 (DVSRGSSASDYN). Disulfide bonds link Cys405/Cys471, Cys434/Cys503, and Cys438/Cys505.

The protein belongs to the TGF-beta family. Interacts with SOSTDC1. Interacts (when glycosylated) with type I receptor ACVR1; the interaction may induce HAMP expression. Interacts with type II receptor ACVR2B. Interacts with Hemojuvelin/HJV. Interacts with ERFE; the interaction inhibits BMP-induced transcription of HAMP. Interacts with BMPR1A/ALK3. Forms heterodimers with BMP2 in vitro; the heterodimer then binds to its receptor BMPR1A /ALK3 and may induce HAMP expression.

The protein localises to the secreted. Its function is as follows. Growth factor of the TGF-beta superfamily that plays essential roles in many developmental processes including cartilage and bone formation. Also plays an important role in the regulation of HAMP/hepcidin expression and iron metabolism by acting as a ligand for hemojuvelin/HJV. Also acts to promote expression of HAMP, potentially via the interaction with its receptor BMPR1A/ALK3. Initiates the canonical BMP signaling cascade by associating with type I receptor ACVR1 and type II receptor ACVR2B. In turn, ACVR1 propagates signal by phosphorylating SMAD1/5/8 that travel to the nucleus and act as activators and repressors of transcription of target. Can also signal through non-canonical pathway such as TAZ-Hippo signaling cascade to modulate VEGF signaling by regulating VEGFR2 expression. This Rattus norvegicus (Rat) protein is Bone morphogenetic protein 6 (Bmp6).